A 104-amino-acid polypeptide reads, in one-letter code: Large ribosomal subunit protein uL24 (104 aa).

It belongs to the universal ribosomal protein uL24 family. As to quaternary structure, part of the 50S ribosomal subunit.

One of two assembly initiator proteins, it binds directly to the 5'-end of the 23S rRNA, where it nucleates assembly of the 50S subunit. Functionally, one of the proteins that surrounds the polypeptide exit tunnel on the outside of the subunit. The protein is Large ribosomal subunit protein uL24 of Shewanella pealeana (strain ATCC 700345 / ANG-SQ1).